Reading from the N-terminus, the 218-residue chain is N-(5'-phosphoribosyl)anthranilate isomerase (218 aa).

This sequence belongs to the TrpF family.

The catalysed reaction is N-(5-phospho-beta-D-ribosyl)anthranilate = 1-(2-carboxyphenylamino)-1-deoxy-D-ribulose 5-phosphate. It functions in the pathway amino-acid biosynthesis; L-tryptophan biosynthesis; L-tryptophan from chorismate: step 3/5. The chain is N-(5'-phosphoribosyl)anthranilate isomerase from Stenotrophomonas maltophilia (strain K279a).